Reading from the N-terminus, the 126-residue chain is Large ribosomal subunit protein bL19 (126 aa).

It belongs to the bacterial ribosomal protein bL19 family.

Functionally, this protein is located at the 30S-50S ribosomal subunit interface and may play a role in the structure and function of the aminoacyl-tRNA binding site. The protein is Large ribosomal subunit protein bL19 of Nitrobacter winogradskyi (strain ATCC 25391 / DSM 10237 / CIP 104748 / NCIMB 11846 / Nb-255).